The chain runs to 179 residues: Coatomer subunit zeta-2 (179 aa).

It belongs to the adaptor complexes small subunit family. As to quaternary structure, oligomeric complex that consists of at least the alpha, beta, beta', gamma, delta, epsilon and zeta subunits.

It is found in the cytoplasm. Its subcellular location is the golgi apparatus membrane. The protein localises to the cytoplasmic vesicle. It localises to the COPI-coated vesicle membrane. In terms of biological role, the coatomer is a cytosolic protein complex that binds to dilysine motifs and reversibly associates with Golgi non-clathrin-coated vesicles, which further mediate biosynthetic protein transport from the ER, via the Golgi up to the trans Golgi network. Coatomer complex is required for budding from Golgi membranes, and is essential for the retrograde Golgi-to-ER transport of dilysine-tagged proteins. The zeta subunit may be involved in regulating the coat assembly and, hence, the rate of biosynthetic protein transport due to its association-dissociation properties with the coatomer complex. The protein is Coatomer subunit zeta-2 of Arabidopsis thaliana (Mouse-ear cress).